Reading from the N-terminus, the 123-residue chain is Periplasmic [Fe] hydrogenase small subunit (123 aa).

The segment at residues 1–34 (MQIASITRRGFLKVACVTTGAALIGIRMTGKAVA) is a signal peptide (tat-type signal). The segment at 103 to 123 (TTAGKLPNPRASEFEGPYPYE) is disordered.

Heterodimer of a large and a small subunit. Predicted to be exported by the Tat system. The position of the signal peptide cleavage has been experimentally proven.

The protein resides in the periplasm. The catalysed reaction is H2 + 2 oxidized [2Fe-2S]-[ferredoxin] = 2 reduced [2Fe-2S]-[ferredoxin] + 2 H(+). In terms of biological role, may be involved in hydrogen uptake for the reduction of sulfate to hydrogen sulfide in an electron transport chain. Cytochrome c3 is likely to be the physiological electron carrier for the enzyme. This chain is Periplasmic [Fe] hydrogenase small subunit (hydB), found in Nitratidesulfovibrio vulgaris (strain ATCC 29579 / DSM 644 / CCUG 34227 / NCIMB 8303 / VKM B-1760 / Hildenborough) (Desulfovibrio vulgaris).